We begin with the raw amino-acid sequence, 64 residues long: Small ribosomal subunit protein eS17 (64 aa).

This sequence belongs to the eukaryotic ribosomal protein eS17 family.

This Methanocorpusculum labreanum (strain ATCC 43576 / DSM 4855 / Z) protein is Small ribosomal subunit protein eS17.